Reading from the N-terminus, the 1452-residue chain is ABC multidrug transporter A (1452 aa).

Positions 1-20 are disordered; that stretch reads MNESHEAGKNSSTNVEEREE. N-linked (GlcNAc...) asparagine glycosylation is found at Asn2, Asn10, Asn228, Asn287, and Asn311. The 254-residue stretch at 110 to 363 folds into the ABC transporter 1 domain; that stretch reads LKTLSLARIA…FLQMGFVCPD (254 aa). 6 consecutive transmembrane segments (helical) span residues 474–494, 508–528, 554–574, 583–603, 616–636, and 725–745; these read VTISSLFGNTIISLVIASIFY, ALLFFAVLMNALGCGLEMLTL, MIMDLPYKILNAITSNIVLYF, GAFFFFVFTSFILTLTMSMFF, VLPFSAVLLLGLSMYTGFAIP, and IGVIFAYMFLLGAVYLVATDF. The 243-residue stretch at 802–1044 folds into the ABC transporter 2 domain; that stretch reads FQWKDVCFDI…ILIDYFVRNG (243 aa). 838–845 serves as a coordination point for ATP; it reads GVSGAGKT. A run of 5 helical transmembrane segments spans residues 1153-1173, 1183-1203, 1223-1243, 1271-1291, and 1297-1317; these read ALCVLSALFVGFSLFHTPNTI, IFMLLTLFGQLIQQIMPHFVA, FLIANIVVELPWNSLMSVLMF, LMIWTFLLFSSTFAHFMIAAF, and AGNLGNLLFLLCLLFCGVLAT. N-linked (GlcNAc...) asparagine glycosylation is found at Asn1350, Asn1365, and Asn1391. Residues 1418-1438 form a helical membrane-spanning segment; that stretch reads FGLMWVFIVFNIFAACSLYWW.

The protein belongs to the ABC transporter superfamily. ABCG family. PDR (TC 3.A.1.205) subfamily.

It localises to the membrane. Functionally, ABC transporter that seems not to be involved in the efflux of toxic substances, at least not the classical compounds such as itraconazole, amphotericin B, voriconazole, posaconazole, ravuconazole, or echinocandins. This Aspergillus fumigatus (Neosartorya fumigata) protein is ABC multidrug transporter A.